The chain runs to 426 residues: Glutamate-1-semialdehyde 2,1-aminomutase (426 aa).

An N6-(pyridoxal phosphate)lysine modification is found at Lys265.

The protein belongs to the class-III pyridoxal-phosphate-dependent aminotransferase family. HemL subfamily. As to quaternary structure, homodimer. Pyridoxal 5'-phosphate is required as a cofactor.

It localises to the cytoplasm. It catalyses the reaction (S)-4-amino-5-oxopentanoate = 5-aminolevulinate. The protein operates within porphyrin-containing compound metabolism; protoporphyrin-IX biosynthesis; 5-aminolevulinate from L-glutamyl-tRNA(Glu): step 2/2. The protein is Glutamate-1-semialdehyde 2,1-aminomutase of Hydrogenovibrio crunogenus (strain DSM 25203 / XCL-2) (Thiomicrospira crunogena).